The sequence spans 852 residues: MPENLSSALETFKQQRNAAEAHYLKANRVSVFFREYTAAVETLLAALWAEHFQNSALCLMAVGGFGRGEPYPCSDVDLAVVSPAPLSDGIQEQIARFIQTLWDCKLMPSVKSGSVDELCESVRDDITGDTAFLEARFLFGNRQTADELAEKMNVQRNVAAFIEAKLVEMEHRHAKSQGSGAVLEPNIKSCPGGLRDIHTLLWIAKAQGLAANLPDLLKQRILTRAEAGMLSHGYRRLAHIRIRLHLNAKRAEDRLLFDLQPQVAESMGYQDENRRRQSEELMRVFYRAVKTVKQLGGILTPMLRSRVSSTPVRVTLRIDDDYIQVNNQIAARHTDIFFRRPEHIFKIVEIMQQRNDITALEPQTLRAWWGATRKINRSFYQNSENRRRFAGFFRSGNGLTQTLRFLNLYGVLGRYLPAWEKIVGLLQHDLFHIYPVDDHILAVVRNVRRLALDMHSHELPYASALMQSFEKQDILYLAAFFHDIAKGRGGDHAVQGIADARQFAADHFLTEEESDLLAWLVENHLLMSAVAQKEDIQDPGVLDAFCKRVQTHERLSALYLLTISDIRGTNPKLWNAWRASLLESLFHAAGRCLAGNDGNPHALFGRRRQEAADLLTRAAVPEKQQKKLWNALGSAYFARHQSREILWHAANLVHDFEPPIVRSRILPQSDSFQVMVFMPNGPRLFARLCRIFSRHGFDILAARAFITEHDYILDTFIVQIPSQHAPEDYPDIQSALEAELNSFIHGHTVAETQSCNRRISRRSRYMPIAPSITITPEEDYPDRYSVEITAVNRPFLLADMAEVFFAHNVSLRYAKISTLDERVEDSFTVFSPDLKNPKIQSSLKQALLEQLA.

The uridylyltransferase stretch occupies residues 1–318 (MPENLSSALE…STPVRVTLRI (318 aa)). The segment at 319 to 672 (DDDYIQVNNQ…SRILPQSDSF (354 aa)) is uridylyl-removing. Residues 436 to 558 (VDDHILAVVR…VQTHERLSAL (123 aa)) form the HD domain. 2 consecutive ACT domains span residues 673–757 (QVMV…SCNR) and 785–852 (SVEI…EQLA).

The protein belongs to the GlnD family. Requires Mg(2+) as cofactor.

It carries out the reaction [protein-PII]-L-tyrosine + UTP = [protein-PII]-uridylyl-L-tyrosine + diphosphate. It catalyses the reaction [protein-PII]-uridylyl-L-tyrosine + H2O = [protein-PII]-L-tyrosine + UMP + H(+). Its activity is regulated as follows. Uridylyltransferase (UTase) activity is inhibited by glutamine, while glutamine activates uridylyl-removing (UR) activity. In terms of biological role, modifies, by uridylylation and deuridylylation, the PII regulatory proteins (GlnB and homologs), in response to the nitrogen status of the cell that GlnD senses through the glutamine level. Under low glutamine levels, catalyzes the conversion of the PII proteins and UTP to PII-UMP and PPi, while under higher glutamine levels, GlnD hydrolyzes PII-UMP to PII and UMP (deuridylylation). Thus, controls uridylylation state and activity of the PII proteins, and plays an important role in the regulation of nitrogen assimilation and metabolism. This is Bifunctional uridylyltransferase/uridylyl-removing enzyme from Neisseria gonorrhoeae (strain ATCC 700825 / FA 1090).